The sequence spans 432 residues: UDP-N-acetylmuramoylalanine--D-glutamate ligase (432 aa).

98 to 104 (GTNGKST) provides a ligand contact to ATP.

Belongs to the MurCDEF family.

The protein resides in the cytoplasm. The enzyme catalyses UDP-N-acetyl-alpha-D-muramoyl-L-alanine + D-glutamate + ATP = UDP-N-acetyl-alpha-D-muramoyl-L-alanyl-D-glutamate + ADP + phosphate + H(+). It participates in cell wall biogenesis; peptidoglycan biosynthesis. Cell wall formation. Catalyzes the addition of glutamate to the nucleotide precursor UDP-N-acetylmuramoyl-L-alanine (UMA). This chain is UDP-N-acetylmuramoylalanine--D-glutamate ligase, found in Fusobacterium nucleatum subsp. nucleatum (strain ATCC 25586 / DSM 15643 / BCRC 10681 / CIP 101130 / JCM 8532 / KCTC 2640 / LMG 13131 / VPI 4355).